Consider the following 167-residue polypeptide: Large ribosomal subunit protein uL23 (167 aa).

Positions 1 to 130 (MNVNEIIKGP…ELEAKNKEIA (130 aa)) are large ribosomal subunit protein uL23. 2 disordered regions span residues 91-112 (FEDE…TDEK) and 137-167 (QAEL…NSAK). Basic and acidic residues-rich tracts occupy residues 97 to 112 (QDQK…TDEK) and 137 to 157 (QAEL…KIEN). The unknown stretch occupies residues 131–167 (EKLAKKQAELAKKESETNENQEKKIENQTENQENSAK). The span at 158 to 167 (QTENQENSAK) shows a compositional bias: polar residues.

This sequence belongs to the universal ribosomal protein uL23 family. As to quaternary structure, part of the 50S ribosomal subunit. Contacts protein L29, and trigger factor when it is bound to the ribosome.

In terms of biological role, one of the early assembly proteins it binds 23S rRNA. One of the proteins that surrounds the polypeptide exit tunnel on the outside of the ribosome. Forms the main docking site for trigger factor binding to the ribosome. This is Large ribosomal subunit protein uL23 from Mesomycoplasma hyopneumoniae (strain 7448) (Mycoplasma hyopneumoniae).